A 327-amino-acid polypeptide reads, in one-letter code: Solute-binding protein SPO1773 (327 aa).

The N-terminal stretch at 1–26 (MTISFKGLARGVACAALVLAALPAAA) is a signal peptide. 3-hydroxybenzoate is bound by residues 39-41 (HTW), Arg-150, 170-172 (RIT), and Asp-211.

It belongs to the bacterial solute-binding protein 7 family. The complex is comprised of an extracytoplasmic solute-binding protein and a heteromeric permease formed by two transmembrane proteins.

The protein localises to the periplasm. Its function is as follows. Solute-binding protein that binds 3,4-dihydroxybenzoate and 3-hydroxybenzoate (in vitro). Probably part of a tripartite ATP-independent periplasmic (TRAP) transport system that mediates solute transport into the cytoplasm. The protein is Solute-binding protein SPO1773 of Ruegeria pomeroyi (strain ATCC 700808 / DSM 15171 / DSS-3) (Silicibacter pomeroyi).